We begin with the raw amino-acid sequence, 111 residues long: Large ribosomal subunit protein uL22 (111 aa).

The protein belongs to the universal ribosomal protein uL22 family. In terms of assembly, part of the 50S ribosomal subunit.

In terms of biological role, this protein binds specifically to 23S rRNA; its binding is stimulated by other ribosomal proteins, e.g. L4, L17, and L20. It is important during the early stages of 50S assembly. It makes multiple contacts with different domains of the 23S rRNA in the assembled 50S subunit and ribosome. The globular domain of the protein is located near the polypeptide exit tunnel on the outside of the subunit, while an extended beta-hairpin is found that lines the wall of the exit tunnel in the center of the 70S ribosome. In Chlamydia trachomatis serovar A (strain ATCC VR-571B / DSM 19440 / HAR-13), this protein is Large ribosomal subunit protein uL22.